The chain runs to 430 residues: tRNA(Ile)-lysidine synthase (430 aa).

27-32 (SGGSDS) is a binding site for ATP.

It belongs to the tRNA(Ile)-lysidine synthase family.

Its subcellular location is the cytoplasm. The catalysed reaction is cytidine(34) in tRNA(Ile2) + L-lysine + ATP = lysidine(34) in tRNA(Ile2) + AMP + diphosphate + H(+). Ligates lysine onto the cytidine present at position 34 of the AUA codon-specific tRNA(Ile) that contains the anticodon CAU, in an ATP-dependent manner. Cytidine is converted to lysidine, thus changing the amino acid specificity of the tRNA from methionine to isoleucine. This is tRNA(Ile)-lysidine synthase from Rickettsia bellii (strain RML369-C).